Here is a 463-residue protein sequence, read N- to C-terminus: Peptidylprolyl isomerase cyp7 (463 aa).

Residues 11–166 (ATGTVILKTT…FPPKIISTEV (156 aa)) form the PPIase cyclophilin-type domain. Residues 224 to 275 (VKKPLRQKTPVSRSSDTTTELSKDLISSSSSIHSTYSSAQTGLTSAKVSSDE) are disordered. Positions 232–243 (TPVSRSSDTTTE) are enriched in polar residues. Positions 250 to 261 (SSSSSIHSTYSS) are enriched in low complexity. Positions 262-271 (AQTGLTSAKV) are enriched in polar residues.

This sequence belongs to the cyclophilin-type PPIase family. CWC27 subfamily. Belongs to the 40S cdc5-associated complex (or cwf complex), a spliceosome sub-complex reminiscent of a late-stage spliceosome composed of the U2, U5 and U6 snRNAs and at least brr2, cdc5, cwf2/prp3, cwf3/syf1, cwf4/syf3, cwf5/ecm2, spp42/cwf6, cwf7/spf27, cwf8, cwf9, cwf10, cwf11, cwf12, prp45/cwf13, cwf14, cwf15, cwf16, cwf17, cwf18, cwf19, cwf20, cwf21, cwf22, cwf23, cwf24, cwf25, cwf26, cyp7/cwf27, cwf28, cwf29/ist3, lea1, msl1, prp5/cwf1, prp10, prp12/sap130, prp17, prp22, sap61, sap62, sap114, sap145, slu7, smb1, smd1, smd3, smf1, smg1 and syf2.

The protein resides in the cytoplasm. Its subcellular location is the nucleus. The enzyme catalyses [protein]-peptidylproline (omega=180) = [protein]-peptidylproline (omega=0). Its function is as follows. PPIases accelerate the folding of proteins. Catalyzes the cis-trans isomerization of proline imidic peptide bonds in oligopeptides. Involved in pre-mRNA splicing. This chain is Peptidylprolyl isomerase cyp7 (cyp7), found in Schizosaccharomyces pombe (strain 972 / ATCC 24843) (Fission yeast).